Here is a 183-residue protein sequence, read N- to C-terminus: PLAT domain-containing protein 2 (183 aa).

Positions 1–25 are cleaved as a signal peptide; it reads MMPRRDVLFLSLLLVIATVSAVALA. The PLAT domain maps to 31–158; sequence CVYTFFLRTG…SPYELSAVRN (128 aa).

Its subcellular location is the endoplasmic reticulum. Its function is as follows. Involved in response to abiotic stress. This chain is PLAT domain-containing protein 2, found in Arabidopsis thaliana (Mouse-ear cress).